The chain runs to 206 residues: Small ribosomal subunit protein uS4 (206 aa).

The 61-residue stretch at 96–156 folds into the S4 RNA-binding domain; that stretch reads GRLDNVVYRM…EKSKKQARIK (61 aa).

This sequence belongs to the universal ribosomal protein uS4 family. In terms of assembly, part of the 30S ribosomal subunit. Contacts protein S5. The interaction surface between S4 and S5 is involved in control of translational fidelity.

In terms of biological role, one of the primary rRNA binding proteins, it binds directly to 16S rRNA where it nucleates assembly of the body of the 30S subunit. Its function is as follows. With S5 and S12 plays an important role in translational accuracy. The chain is Small ribosomal subunit protein uS4 from Histophilus somni (strain 129Pt) (Haemophilus somnus).